Consider the following 1481-residue polypeptide: ABC-type transporter braE (1481 aa).

6 helical membrane-spanning segments follow: residues 27–47 (FTVK…FILA), 86–106 (LILI…SSAL), 130–150 (IFLS…ARTY), 159–179 (EIAF…MLLL), 269–289 (LYVP…SFFC), and 308–328 (PANI…VIAI). One can recognise an ABC transmembrane type-1 1 domain in the interval 281–549 (LAAIGSFFCQ…LLETLPQMAA (269 aa)). Residue Asn367 is glycosylated (N-linked (GlcNAc...) asparagine). Helical transmembrane passes span 389-409 (ELWG…NLLG), 410-430 (VAFI…SFFM), and 491-511 (LMLT…PITF). An ABC transporter 1 domain is found at 594–823 (VAIKDGSFGW…QSYIHSLGVK (230 aa)). 627–634 (GPIASGKS) serves as a coordination point for ATP. Asn671 and Asn813 each carry an N-linked (GlcNAc...) asparagine glycan. The next 6 membrane-spanning stretches (helical) occupy residues 887 to 907 (IAIF…TIWL), 928 to 948 (AIYA…GVLL), 1001 to 1021 (SALL…AVIA), 1026 to 1046 (YLAI…KFYL), 1111 to 1131 (LHFV…SLAV), and 1144 to 1164 (LVTL…YTAL). In terms of domain architecture, ABC transmembrane type-1 2 spans 887 to 1166 (IAIFTSGLLY…VVIYYTALET (280 aa)). Asn1207 and Asn1232 each carry an N-linked (GlcNAc...) asparagine glycan. An ABC transporter 2 domain is found at 1224–1477 (LTTNELSSND…PGTRFGELWS (254 aa)). 1260-1267 (GRTGSGKS) lines the ATP pocket. N-linked (GlcNAc...) asparagine glycans are attached at residues Asn1330 and Asn1364.

The protein belongs to the ABC transporter superfamily. ABCC family. Conjugate transporter (TC 3.A.1.208) subfamily.

The protein resides in the membrane. In terms of biological role, ABC-type transporter; part of the gene cluster that mediates the biosynthesis of the brasilane terpene glycosides brasilane D and E. The polypeptide is ABC-type transporter braE (Annulohypoxylon truncatum (Hypoxylon truncatum)).